Reading from the N-terminus, the 191-residue chain is uncharacterized protein (191 aa).

The N-terminal stretch at 1 to 23 is a signal peptide; sequence MKKTMSAITAAAAVTSCFTGFGA.

This is an uncharacterized protein from Bacillus subtilis (strain 168).